Here is a 428-residue protein sequence, read N- to C-terminus: MIFAQEKFVDQGQGKWTVTIQDDQWTEFLKKAKNRLKTNLVVPGFRKGKAPESETAKYLTPIKIYNEAFKIVVKPAFDFALSQENKIQNDNSPTPVIVKVSDKEIVIDFIFDLVLELKVGEYKNITTVKKPVVEVNQEDVDNVIDMYRSRFAMQKEKQADDQIQKGDIVTFDFKGYVDDQAFEGGEAKDFVLEIGSNQFVPGFEDSMIGLKVGENQEINVKFPEEYIPSLAGKDAKFVLNIKNIKEKILPAKDDELVKDLNLPDITTYEQLEQKVKEDVLEQKTKISKSEFVENIIDEIIKTSEFQIPKTIIERQIKDVKKEFEDQLAQQKITLDKYKEITKITQEEIDEELKSDAIHRIKSFLVASEIKNKENIVASEEAINAKFEEFANLYGIEADKIKSLIDNQAIKHQVESELLETFIFENNGN.

The PPIase FKBP-type domain occupies 166–250 (GDIVTFDFKG…IKNIKEKILP (85 aa)).

The protein belongs to the FKBP-type PPIase family. Tig subfamily.

The protein localises to the cytoplasm. It catalyses the reaction [protein]-peptidylproline (omega=180) = [protein]-peptidylproline (omega=0). Its function is as follows. Involved in protein export. Acts as a chaperone by maintaining the newly synthesized protein in an open conformation. Functions as a peptidyl-prolyl cis-trans isomerase. In Mycoplasma mycoides subsp. mycoides SC (strain CCUG 32753 / NCTC 10114 / PG1), this protein is Trigger factor.